The primary structure comprises 382 residues: UDP-4-amino-4-deoxy-L-arabinose--oxoglutarate aminotransferase (382 aa).

The residue at position 183 (K183) is an N6-(pyridoxal phosphate)lysine.

Belongs to the DegT/DnrJ/EryC1 family. ArnB subfamily. As to quaternary structure, homodimer. Pyridoxal 5'-phosphate is required as a cofactor.

The enzyme catalyses UDP-4-amino-4-deoxy-beta-L-arabinose + 2-oxoglutarate = UDP-beta-L-threo-pentopyranos-4-ulose + L-glutamate. It functions in the pathway nucleotide-sugar biosynthesis; UDP-4-deoxy-4-formamido-beta-L-arabinose biosynthesis; UDP-4-deoxy-4-formamido-beta-L-arabinose from UDP-alpha-D-glucuronate: step 2/3. Its pathway is bacterial outer membrane biogenesis; lipopolysaccharide biosynthesis. In terms of biological role, catalyzes the conversion of UDP-4-keto-arabinose (UDP-Ara4O) to UDP-4-amino-4-deoxy-L-arabinose (UDP-L-Ara4N). The modified arabinose is attached to lipid A and is required for resistance to polymyxin and cationic antimicrobial peptides. The polypeptide is UDP-4-amino-4-deoxy-L-arabinose--oxoglutarate aminotransferase (Pseudomonas syringae pv. syringae (strain B728a)).